Here is a 661-residue protein sequence, read N- to C-terminus: MEHHHHHRHMHSPSSQQHEHQQHQQYQQPPQHHQHYEAPQHQQQHQHHHHQQQQQQHPVPVPKQEQADNTSAPVLSALPAYPTLPPIWDSTHSPALSASSSSTMQASASSLSSLPPLVLHPPSNGLQPNKPRSRSPSSNRFQTREPAPLSLFDGSPTTELPPIQLDRKRSSSDHSLPSIASLNVGSSLPTLQPTPTPQPPPKFVWPNSNPLSAYYAESDNDGRGASPQHRHDRRSTSVSLDDPQVMMAISALNELKTDSVSSPPNRNAPLRRGMTDQNQEPEPLLSLITTAHPIIESTVQRSSHLYTKTKNFSPRIRSGLEYVEGSLIPVADTVNNVGRRTGIESGVRWILGKRTKSSSDTRESGQNKRHMTSRPVNGTGGEARFSEAPTADASRRTSVSTIETLPAYDDQRSPAYSETVEQNGQAVDPKSALHAQLGNGRVQVTTSSLKETMKEESLRSLKYVLETLRDVTNTLQQGTNELSSVLDQYDRSTTTRDGEDHVMTNGSAPEEDRTRLVERMTELRKSIYSNIKDVSSVVANYTGAALPENAGNLVRHHLLSLPMVWSQASKTTTSSEQPNTQDPNALVRKAAKVALSFSKEGLHIFSQIMEIIRTATDHAEDWRNKKMNQMTPANGTEQEIRPLIDQPLPQVATINGDIPMR.

Residues methionine 1–histidine 11 show a composition bias toward basic residues. Disordered regions lie at residues methionine 1 to asparagine 69, serine 107 to proline 243, leucine 255 to glutamine 279, and arginine 354 to serine 398. Low complexity-rich tracts occupy residues histidine 23–glutamine 43 and serine 107–arginine 140. A compositionally biased stretch (polar residues) spans aspartate 173–serine 187. Residues glutamine 192 to phenylalanine 203 are compositionally biased toward pro residues. Basic and acidic residues predominate over residues serine 357–glutamine 366.

Its function is as follows. Transcription factor that plays a pivotal role in azole adaptive responses by regulating the drug accumulation in the cells. Affects the transcriptional responses to ketoconazole of many genes, including the target gene (erg11), an azole transporter gene (cdr4), a hexose transporter gene (hxt13), a stress response gene (kts-1), two transcription factor genes (named kts-2 and fsd-1/ndt80). Also regulates phospholipid synthesis that is not involved in azole resistance. The protein is Transcription factor ccg-8 of Neurospora crassa (strain ATCC 24698 / 74-OR23-1A / CBS 708.71 / DSM 1257 / FGSC 987).